Consider the following 225-residue polypeptide: N-(5'-phosphoribosyl)anthranilate isomerase (225 aa).

The protein belongs to the TrpF family.

The catalysed reaction is N-(5-phospho-beta-D-ribosyl)anthranilate = 1-(2-carboxyphenylamino)-1-deoxy-D-ribulose 5-phosphate. The protein operates within amino-acid biosynthesis; L-tryptophan biosynthesis; L-tryptophan from chorismate: step 3/5. This chain is N-(5'-phosphoribosyl)anthranilate isomerase, found in Nitrobacter hamburgensis (strain DSM 10229 / NCIMB 13809 / X14).